Reading from the N-terminus, the 500-residue chain is Lysine--tRNA ligase (500 aa).

Glu-411 and Glu-418 together coordinate Mg(2+).

This sequence belongs to the class-II aminoacyl-tRNA synthetase family. In terms of assembly, homodimer. Mg(2+) is required as a cofactor.

It is found in the cytoplasm. The catalysed reaction is tRNA(Lys) + L-lysine + ATP = L-lysyl-tRNA(Lys) + AMP + diphosphate. The chain is Lysine--tRNA ligase from Actinobacillus pleuropneumoniae serotype 5b (strain L20).